The sequence spans 350 residues: 5'-tyrosyl-DNA phosphodiesterase (350 aa).

An interaction with 5' end of substrate DNA region spans residues 113–117; sequence NIDGL. Residues Asp-115 and Glu-145 each contribute to the Mg(2+) site. The interaction with 5' end of substrate DNA stretch occupies residues 219 to 224; that stretch reads HLESMR. Asp-258 functions as the Proton donor/acceptor in the catalytic mechanism. The interaction with 5' end of substrate DNA stretch occupies residues 260-262; that stretch reads NLR.

This sequence belongs to the CCR4/nocturin family. TTRAP/TDP2 subfamily. The cofactor is Mg(2+). Requires Mn(2+) as cofactor.

Its subcellular location is the nucleus. It localises to the PML body. In terms of biological role, DNA repair enzyme that can remove a variety of covalent adducts from DNA through hydrolysis of a 5'-phosphodiester bond, giving rise to DNA with a free 5' phosphate. Catalyzes the hydrolysis of dead-end complexes between DNA and the topoisomerase 2 (top2) active site tyrosine residue. Hydrolyzes 5'-phosphoglycolates on protruding 5' ends on DNA double-strand breaks (DSBs) due to DNA damage by radiation and free radicals. This chain is 5'-tyrosyl-DNA phosphodiesterase, found in Caenorhabditis briggsae.